Here is a 178-residue protein sequence, read N- to C-terminus: Natriuretic and helokinestatin peptides (178 aa).

A signal peptide spans 1–25; it reads MNPRLACSTWLPLLLVLFTLDQGRA. Propeptides lie at residues 26–58, 69–73, 85–89, 103–112, and 123–146; these read NPVERGQEYRSLSKRFDDDSTELILEPRASEEN, ASDEN, ASEQKGPPFN, and AANENALRKLIKRSFERSPGRNKR. Disordered stretches follow at residues 69–107 and 135–155; these read ASDENVPPAYVPLVPRASDENVPPPPLQMPLIPRASEQK and RSFERSPGRNKRLSPGDGCFG. Cys-153 and Cys-169 are joined by a disulfide.

This sequence in the C-terminal section; belongs to the natriuretic peptide family. In terms of tissue distribution, expressed by the venom gland.

The protein resides in the secreted. Functionally, helokinestatins antagonize the vasodilatory actions of bradykinin at the B2 bradykinin receptor (BDKRB2), with helokinestatin-1 being the most potent antagonist. Its function is as follows. exhibits hypotensive and vasodepressor activities, possibly by targeting natriuretic peptide receptors NPR1 and NPR2. The chain is Natriuretic and helokinestatin peptides from Heloderma suspectum cinctum (Banded Gila monster).